Consider the following 82-residue polypeptide: EMBRYO SURROUNDING FACTOR 1-like protein 10 (82 aa).

Positions Met1 to Phe22 are cleaved as a signal peptide. 4 cysteine pairs are disulfide-bonded: Cys39–Cys55, Cys44–Cys74, Cys53–Cys70, and Cys56–Cys63.

It belongs to the MEG family. As to expression, expressed in stems, leaves and flowers.

The protein is EMBRYO SURROUNDING FACTOR 1-like protein 10 (ESFL10) of Arabidopsis thaliana (Mouse-ear cress).